The sequence spans 507 residues: RNA-splicing ligase RtcB homolog (507 aa).

Positions 121, 124, 229, 261, and 355 each coordinate Mn(2+). 228–232 contacts GMP; the sequence is NHYAE. GMP-binding positions include 355–356, 404–407, Ser-411, 430–433, and Lys-506; these read HN, GGTM, and HGAG. His-430 (GMP-histidine intermediate) is an active-site residue.

It belongs to the RtcB family. As to quaternary structure, catalytic component of the tRNA-splicing ligase complex. Requires Mn(2+) as cofactor.

It carries out the reaction a 3'-end 3'-phospho-ribonucleotide-RNA + a 5'-end dephospho-ribonucleoside-RNA + GTP = a ribonucleotidyl-ribonucleotide-RNA + GMP + diphosphate. It catalyses the reaction a 3'-end 2',3'-cyclophospho-ribonucleotide-RNA + a 5'-end dephospho-ribonucleoside-RNA + GTP + H2O = a ribonucleotidyl-ribonucleotide-RNA + GMP + diphosphate + H(+). Its function is as follows. Catalytic subunit of the tRNA-splicing ligase complex that acts by directly joining spliced tRNA halves to mature-sized tRNAs by incorporating the precursor-derived splice junction phosphate into the mature tRNA as a canonical 3',5'-phosphodiester. May act as an RNA ligase with broad substrate specificity, and may function toward other RNAs. This Plasmodium yoelii yoelii protein is RNA-splicing ligase RtcB homolog.